The sequence spans 418 residues: Glutamyl-tRNA reductase (418 aa).

Substrate-binding positions include 49 to 52 (TCNR), serine 109, 114 to 116 (EPQ), and glutamine 120. The Nucleophile role is filled by cysteine 50. 189-194 (GAGETI) contributes to the NADP(+) binding site.

It belongs to the glutamyl-tRNA reductase family. In terms of assembly, homodimer.

The catalysed reaction is (S)-4-amino-5-oxopentanoate + tRNA(Glu) + NADP(+) = L-glutamyl-tRNA(Glu) + NADPH + H(+). Its pathway is porphyrin-containing compound metabolism; protoporphyrin-IX biosynthesis; 5-aminolevulinate from L-glutamyl-tRNA(Glu): step 1/2. In terms of biological role, catalyzes the NADPH-dependent reduction of glutamyl-tRNA(Glu) to glutamate 1-semialdehyde (GSA). This chain is Glutamyl-tRNA reductase, found in Pectobacterium atrosepticum (strain SCRI 1043 / ATCC BAA-672) (Erwinia carotovora subsp. atroseptica).